The following is a 255-amino-acid chain: Pimeloyl-[acyl-carrier protein] methyl ester esterase (255 aa).

Substrate is bound by residues tryptophan 18, 78–79 (SL), and 139–143 (FLALD). The active-site Nucleophile is the serine 78. Residues aspartate 203 and histidine 233 contribute to the active site. A substrate-binding site is contributed by histidine 233.

The protein belongs to the AB hydrolase superfamily. Carboxylesterase BioH family. Monomer.

The protein localises to the cytoplasm. It catalyses the reaction 6-carboxyhexanoyl-[ACP] methyl ester + H2O = 6-carboxyhexanoyl-[ACP] + methanol + H(+). Its pathway is cofactor biosynthesis; biotin biosynthesis. The physiological role of BioH is to remove the methyl group introduced by BioC when the pimeloyl moiety is complete. It allows to synthesize pimeloyl-ACP via the fatty acid synthetic pathway through the hydrolysis of the ester bonds of pimeloyl-ACP esters. The chain is Pimeloyl-[acyl-carrier protein] methyl ester esterase from Xylella fastidiosa (strain M23).